Reading from the N-terminus, the 317-residue chain is Tyrosine--tRNA ligase (317 aa).

Y33 contacts L-tyrosine. The short motif at 38–46 is the 'HIGH' region element; sequence PSGKIHMGH. L-tyrosine contacts are provided by Y155, Q159, D162, and Q177. The 'KMSKS' region motif lies at 211–215; that stretch reads KMASS. S214 is a binding site for ATP.

The protein belongs to the class-I aminoacyl-tRNA synthetase family. TyrS type 3 subfamily. Homodimer.

It localises to the cytoplasm. The catalysed reaction is tRNA(Tyr) + L-tyrosine + ATP = L-tyrosyl-tRNA(Tyr) + AMP + diphosphate + H(+). Catalyzes the attachment of tyrosine to tRNA(Tyr) in a two-step reaction: tyrosine is first activated by ATP to form Tyr-AMP and then transferred to the acceptor end of tRNA(Tyr). This Methanosarcina mazei (strain ATCC BAA-159 / DSM 3647 / Goe1 / Go1 / JCM 11833 / OCM 88) (Methanosarcina frisia) protein is Tyrosine--tRNA ligase.